We begin with the raw amino-acid sequence, 39 residues long: Photosystem I reaction center subunit IX (39 aa).

The chain crosses the membrane as a helical span at residues 7-27 (FLTTAPVAFILFSSFVFALFI).

It belongs to the PsaJ family.

Its subcellular location is the cellular thylakoid membrane. In terms of biological role, may help in the organization of the PsaE and PsaF subunits. This is Photosystem I reaction center subunit IX from Synechococcus sp. (strain JA-3-3Ab) (Cyanobacteria bacterium Yellowstone A-Prime).